Consider the following 405-residue polypeptide: Polyketide biosynthesis cytochrome P450 PksS (405 aa).

The helical transmembrane segment at 231–251 threads the bilayer; it reads LYSMLFLLVVAGLETTVNLLG. Position 352 (Cys352) interacts with heme.

It belongs to the cytochrome P450 family.

Its subcellular location is the cell membrane. Its pathway is antibiotic biosynthesis; bacillaene biosynthesis. Involved in the metabolism of the antibiotic polyketide bacillaene which is involved in secondary metabolism. The substrate is dihydrobacillaene. The protein is Polyketide biosynthesis cytochrome P450 PksS (pksS) of Bacillus subtilis (strain 168).